A 2346-amino-acid chain; its full sequence is Myomegalin (2346 aa).

4 coiled-coil regions span residues 41-132, 162-205, 238-318, and 350-684; these read REDI…LVEA, DQYT…LLEE, DSHL…REML, and CSQL…RQYL. Residue glutamate 252 is modified to Phosphoserine. The segment at 698–732 is disordered; the sequence is NQQAEVTPTGRLGKQTDQGSMQIPSRDDSTSLTAK. Threonine 704 carries the post-translational modification Phosphothreonine. The segment covering 722–732 has biased composition (basic and acidic residues); sequence SRDDSTSLTAK. Coiled coils occupy residues 743–936, 1002–1043, 1096–1124, 1212–1240, 1346–1385, and 1431–1455; these read GDLD…TLAA, LQEE…SSVS, SSLQAEFRKLQGKLKNAHNIINLLKEQLV, STQHLRSQLSQCKQRYQDLQEKLLLSEAT, GKSENILVLRKDIKDLKAQLQNANKVIQNLKSRVRSLSVT, and GLQAKKDLESLIQRVSQLEAQLPKN. Positions 1193-1214 are disordered; it reads DNQSQPRDPGPQSAFSLPGSTQ. Residues 1205–1214 are compositionally biased toward polar residues; that stretch reads SAFSLPGSTQ. Residues 1551 to 1642 enclose the Olduvai domain; it reads KDHKSEKDQA…EEKKASPSHS (92 aa). The segment covering 1591-1600 has biased composition (low complexity); sequence SLTPSSSHAL. Disordered stretches follow at residues 1591–1614 and 1633–1690; these read SLTPSSSHALSDSHRSPSSTSFLS and EEKK…EANQ. Residues 1652–1690 show a composition bias toward polar residues; the sequence is AVLSSKPSSTSASQGAKAESNSNPISLPTPQNTPKEANQ. Coiled-coil stretches lie at residues 1736-1760 and 1840-2077; these read VVSLAEAQQELQMLQKQLGESASTV and GADL…QQLE. 2 disordered regions span residues 2081–2103 and 2127–2156; these read GKASLSPSSINQNFPASTDPGNK and VFPSSASSTPGSETPIINRANGLGLDTSPV. Residues 2085–2103 are compositionally biased toward polar residues; sequence LSPSSINQNFPASTDPGNK. The stretch at 2273–2312 forms a coiled coil; it reads ESTERELLELRTKVSKQERLLQSTTEHLKNANQQKESMEQ.

In terms of assembly, interacts with PDE4D. Isoform 13 interacts with MAPRE1 and MAPRE3. Isoform 13 forms a pericentrosomal complex with AKAP9, CDK5RAP2 and EB1/MAPRE1; within this complex, may mediate MAPRE1-binding to CDK5RAP2. Interaction of isoform 13 with AKAP9 stabilizes both proteins. Isoform 13 interacts (via N-terminus) with CAMSAP2; this interaction is much stronger in the presence of AKAP9. In complex with AKAP9, Isoform 13 recruits CAMSAP2 to the Golgi apparatus. Isoform 13 interacts with unglycosylated LGALS3BP; this interaction may connect the pericentrosomal complex to the gamma-tubulin ring complex (gamma-TuRC) to promote microtubule assembly and acetylation. Highly expressed in adult and fetal heart, in skeletal muscle and, to a lower extent, in brain and placenta.

Its subcellular location is the golgi apparatus. The protein localises to the cytoplasm. It localises to the cytoskeleton. The protein resides in the microtubule organizing center. It is found in the centrosome. Its function is as follows. Functions as an anchor sequestering components of the cAMP-dependent pathway to Golgi and/or centrosomes. Participates in microtubule dynamics, promoting microtubule assembly. Depending upon the cell context, may act at the level of the Golgi apparatus or that of the centrosome. In complex with AKAP9, recruits CAMSAP2 to the Golgi apparatus and tethers non-centrosomal minus-end microtubules to the Golgi, an important step for polarized cell movement. In complex with AKAP9, EB1/MAPRE1 and CDK5RAP2, contributes to microtubules nucleation and extension from the centrosome to the cell periphery, a crucial process for directed cell migration, mitotic spindle orientation and cell-cycle progression. The sequence is that of Myomegalin (PDE4DIP) from Homo sapiens (Human).